The sequence spans 515 residues: Protein translocase subunit SecD (515 aa).

Transmembrane regions (helical) follow at residues 5-25, 353-373, 375-395, 398-418, 450-470, and 477-497; these read LIAK…LATP, KGIL…VAYY, LSGL…MGLL, FGAT…GIAV, FSTI…LFQF, and GFAV…ILCT.

It belongs to the SecD/SecF family. SecD subfamily. In terms of assembly, forms a complex with SecF. Part of the essential Sec protein translocation apparatus which comprises SecA, SecYEG and auxiliary proteins SecDF. Other proteins may also be involved.

It is found in the cell inner membrane. In terms of biological role, part of the Sec protein translocase complex. Interacts with the SecYEG preprotein conducting channel. SecDF uses the proton motive force (PMF) to complete protein translocation after the ATP-dependent function of SecA. This Desulfurispirillum indicum (strain ATCC BAA-1389 / DSM 22839 / S5) protein is Protein translocase subunit SecD.